A 295-amino-acid polypeptide reads, in one-letter code: Perivine-Nbeta-methyltransferase (295 aa).

The segment at Ile-76–Gly-85 is SAM motif I. The Vacuolar targeting signal signature appears at Asp-138 to Ile-144. The segment at Gly-139–Ile-147 is SAM motif II. An SAM motif III region spans residues Val-166–Ile-175.

This sequence belongs to the class I-like SAM-binding methyltransferase superfamily. gTMT family. In terms of assembly, homodimer. Mainly expressed in young leaves, and, to a lower extent, in mature leaves, flowers, stems and roots (at protein level). Transcripts levels are highest in flowers, moderate in leaves and low in roots and stems.

The protein localises to the vacuole membrane. It catalyses the reaction perivine + S-adenosyl-L-methionine = vobasine + S-adenosyl-L-homocysteine + 2 H(+). Its pathway is alkaloid biosynthesis; vindoline biosynthesis. S-adenosyl-L-methionine-dependent N-methyltransferase involved in the biosynthesis of biologically active monoterpenoid indole alkaloids (MIAs) natural products including vindoline. Catalyzes the conversion of perivine to Nbeta-methylperivine (vobasine) by methylating its N4 nitrogen. Inactive with picrinine as substrate. This chain is Perivine-Nbeta-methyltransferase, found in Catharanthus roseus (Madagascar periwinkle).